Here is a 500-residue protein sequence, read N- to C-terminus: L-arabinose isomerase (500 aa).

Positions 306, 333, 350, and 450 each coordinate Mn(2+).

It belongs to the arabinose isomerase family. As to quaternary structure, homohexamer. Mn(2+) serves as cofactor.

It catalyses the reaction beta-L-arabinopyranose = L-ribulose. It functions in the pathway carbohydrate degradation; L-arabinose degradation via L-ribulose; D-xylulose 5-phosphate from L-arabinose (bacterial route): step 1/3. In terms of biological role, catalyzes the conversion of L-arabinose to L-ribulose. The sequence is that of L-arabinose isomerase from Salmonella enteritidis PT4 (strain P125109).